Reading from the N-terminus, the 668-residue chain is mRNA cap guanine-N(7) methyltransferase (668 aa).

Residues 1–19 (MYDPARDSWEERDGDEARS) show a composition bias toward basic and acidic residues. The tract at residues 1–281 (MYDPARDSWE…RAQVEEAMRA (281 aa)) is disordered. Polar residues predominate over residues 44–65 (GENNNTTDLQQHPDPSSKTTAS). Low complexity predominate over residues 73–88 (SQPAQPTTQTPPSVST). The span at 100-129 (KASNPQSLTSTAQNQLNKSNTTMENTSGSA) shows a compositional bias: polar residues. The span at 133-142 (PRADPSDKPN) shows a compositional bias: basic and acidic residues. Over residues 148-157 (ASPTDQNGSQ) the composition is skewed to polar residues. Residues 257-279 (LVDRETLRRRQEERERAQVEEAM) show a composition bias toward basic and acidic residues. The mRNA cap 0 methyltransferase domain maps to 310-668 (SKIKGLRSFN…FYHAFCFYKV (359 aa)). 319 to 320 (NN) lines the mRNA pocket. S-adenosyl-L-methionine contacts are provided by residues Lys323, Gly366, Asp390, Asp428, 471–473 (MFT), and Tyr476. The interval 524 to 547 (ARQAQAKKEKSDEAPEDGEVEEDD) is disordered. Residues 537-547 (APEDGEVEEDD) show a composition bias toward acidic residues.

Belongs to the class I-like SAM-binding methyltransferase superfamily. mRNA cap 0 methyltransferase family.

The protein localises to the nucleus. It catalyses the reaction a 5'-end (5'-triphosphoguanosine)-ribonucleoside in mRNA + S-adenosyl-L-methionine = a 5'-end (N(7)-methyl 5'-triphosphoguanosine)-ribonucleoside in mRNA + S-adenosyl-L-homocysteine. Responsible for methylating the 5'-cap structure of mRNAs. This is mRNA cap guanine-N(7) methyltransferase (abd1) from Aspergillus fumigatus (strain ATCC MYA-4609 / CBS 101355 / FGSC A1100 / Af293) (Neosartorya fumigata).